We begin with the raw amino-acid sequence, 918 residues long: Serine/threonine-protein kinase D1 (918 aa).

Tyrosine 93 is modified (phosphotyrosine). Residues 144–194 form a Phorbol-ester/DAG-type 1 zinc finger; it reads PHALFVHSYRAPAFCDHCGEMLWGLVRQGLKCEGCGLNYHKRCAFKIPNNC. Phosphoserine occurs at positions 203, 206, 217, and 221. Residues 276 to 326 form a Phorbol-ester/DAG-type 2 zinc finger; sequence PHTFVIHSYTRPTVCQFCKKLLKGLFRQGLQCKDCRFNCHKRCAPKVPNNC. Disordered stretches follow at residues 338 to 362 and 379 to 410; these read SPGAESDVVMEEGSDDNDSERNSGL and AEGQSGGAEMQDPDADQEDSNRTISPSTSNNI. A compositionally biased stretch (acidic residues) spans 345–355; that stretch reads VVMEEGSDDND. Serine 351 is modified (phosphoserine). Over residues 400-410 the composition is skewed to polar residues; the sequence is RTISPSTSNNI. Residues serine 403 and serine 407 each carry the phosphoserine; by MAPK13 modification. The region spanning 428–547 is the PH domain; the sequence is TVMKEGWMVH…WEVAIQHALM (120 aa). Tyrosine 438 carries the phosphotyrosine modification. The residue at position 454 (serine 454) is a Phosphoserine. At tyrosine 469 the chain carries Phosphotyrosine; by ABL. Position 508 is a phosphotyrosine (tyrosine 508). Phosphoserine is present on serine 554. One can recognise a Protein kinase domain in the interval 589–845; sequence IFPDEVLGSG…VDKTLSHPWL (257 aa). Residues 595-603 and lysine 618 each bind ATP; that span reads LGSGQFGIV. Aspartate 712 functions as the Proton acceptor in the catalytic mechanism. Serine 744 is modified (phosphoserine; by PKC/PRKCD). A Phosphoserine; by autocatalysis and PKC/PRKCD modification is found at serine 748. Tyrosine 755 carries the phosphotyrosine modification. Serine 916 is modified (phosphoserine; by autocatalysis).

It belongs to the protein kinase superfamily. CAMK Ser/Thr protein kinase family. PKD subfamily. As to quaternary structure, interacts (via N-terminus) with ADAP1/CENTA1. Interacts with MAPK13. Interacts with DAPK1 in an oxidative stress-regulated manner. Interacts with USP28; the interaction induces phosphorylation of USP28 and activated KRAS-mediated stabilization of ZNF304. Interacts with AKAP13 (via C-terminal domain). Mg(2+) serves as cofactor. Post-translationally, phosphorylated at Ser-403 and Ser-407 by MAPK13 during regulation of insulin secretion in pancreatic beta cells. Phosphorylated by DAPK1. Phosphorylated at Tyr-93 and by ABL at Tyr-469, which primes the kinase in response to oxidative stress, and promotes a second step activating phosphorylation at Ser-744/Ser-748 by PKRD. Phosphorylated at Ser-916 upon S.enterica infection in macrophages.

It is found in the cytoplasm. It localises to the cell membrane. The protein localises to the golgi apparatus. Its subcellular location is the trans-Golgi network. The enzyme catalyses L-seryl-[protein] + ATP = O-phospho-L-seryl-[protein] + ADP + H(+). It carries out the reaction L-threonyl-[protein] + ATP = O-phospho-L-threonyl-[protein] + ADP + H(+). Activated by DAG and phorbol esters. Phorbol-ester/DAG-type domain 1 binds DAG with high affinity and appears to play the dominant role in mediating translocation to the cell membrane and trans-Golgi network. Phorbol-ester/DAG-type domain 2 binds phorbol ester with higher affinity. Autophosphorylation of Ser-748 and phosphorylation of Ser-744 by PKC relieves auto-inhibition by the PH domain. Phosphorylation on Tyr-469 by the SRC-ABL1 pathway in response to oxidative stress, is also required for activation. Activated by DAPK1 under oxidative stress. Its function is as follows. Serine/threonine-protein kinase that converts transient diacylglycerol (DAG) signals into prolonged physiological effects downstream of PKC, and is involved in the regulation of MAPK8/JNK1 and Ras signaling, Golgi membrane integrity and trafficking, cell survival through NF-kappa-B activation, cell migration, cell differentiation by mediating HDAC7 nuclear export, cell proliferation via MAPK1/3 (ERK1/2) signaling, and plays a role in cardiac hypertrophy, VEGFA-induced angiogenesis, genotoxic-induced apoptosis and flagellin-stimulated inflammatory response. Phosphorylates the epidermal growth factor receptor (EGFR) on dual threonine residues, which leads to the suppression of epidermal growth factor (EGF)-induced MAPK8/JNK1 activation and subsequent JUN phosphorylation. Phosphorylates RIN1, inducing RIN1 binding to 14-3-3 proteins YWHAB, YWHAE and YWHAZ and increased competition with RAF1 for binding to GTP-bound form of Ras proteins (NRAS, HRAS and KRAS). Acts downstream of the heterotrimeric G-protein beta/gamma-subunit complex to maintain the structural integrity of the Golgi membranes, and is required for protein transport along the secretory pathway. In the trans-Golgi network (TGN), regulates the fission of transport vesicles that are on their way to the plasma membrane. May act by activating the lipid kinase phosphatidylinositol 4-kinase beta (PI4KB) at the TGN for the local synthesis of phosphorylated inositol lipids, which induces a sequential production of DAG, phosphatidic acid (PA) and lyso-PA (LPA) that are necessary for membrane fission and generation of specific transport carriers to the cell surface. Under oxidative stress, is phosphorylated at Tyr-469 via SRC-ABL1 and contributes to cell survival by activating IKK complex and subsequent nuclear translocation and activation of NFKB1. Involved in cell migration by regulating integrin alpha-5/beta-3 recycling and promoting its recruitment in newly forming focal adhesion. In osteoblast differentiation, mediates the bone morphogenetic protein 2 (BMP2)-induced nuclear export of HDAC7, which results in the inhibition of HDAC7 transcriptional repression of RUNX2. In neurons, plays an important role in neuronal polarity by regulating the biogenesis of TGN-derived dendritic vesicles, and is involved in the maintenance of dendritic arborization and Golgi structure in hippocampal cells. May potentiate mitogenesis induced by the neuropeptide bombesin or vasopressin by mediating an increase in the duration of MAPK1/3 (ERK1/2) signaling, which leads to accumulation of immediate-early gene products including FOS that stimulate cell cycle progression. Plays an important role in the proliferative response induced by low calcium in keratinocytes, through sustained activation of MAPK1/3 (ERK1/2) pathway. Downstream of novel PKC signaling, plays a role in cardiac hypertrophy by phosphorylating HDAC5, which in turn triggers XPO1/CRM1-dependent nuclear export of HDAC5, MEF2A transcriptional activation and induction of downstream target genes that promote myocyte hypertrophy and pathological cardiac remodeling. Mediates cardiac troponin I (TNNI3) phosphorylation at the PKA sites, which results in reduced myofilament calcium sensitivity, and accelerated crossbridge cycling kinetics. The PRKD1-HDAC5 pathway is also involved in angiogenesis by mediating VEGFA-induced specific subset of gene expression, cell migration, and tube formation. In response to VEGFA, is necessary and required for HDAC7 phosphorylation which induces HDAC7 nuclear export and endothelial cell proliferation and migration. During apoptosis induced by cytarabine and other genotoxic agents, PRKD1 is cleaved by caspase-3 at Asp-378, resulting in activation of its kinase function and increased sensitivity of cells to the cytotoxic effects of genotoxic agents. In epithelial cells, is required for transducing flagellin-stimulated inflammatory responses by binding and phosphorylating TLR5, which contributes to MAPK14/p38 activation and production of inflammatory cytokines. Acts as an activator of NLRP3 inflammasome assembly by mediating phosphorylation of NLRP3. May play a role in inflammatory response by mediating activation of NF-kappa-B. May be involved in pain transmission by directly modulating TRPV1 receptor. Plays a role in activated KRAS-mediated stabilization of ZNF304 in colorectal cancer (CRC) cells. Regulates nuclear translocation of transcription factor TFEB in macrophages upon live S.enterica infection. This chain is Serine/threonine-protein kinase D1 (Prkd1), found in Mus musculus (Mouse).